The primary structure comprises 61 residues: Photosystem II reaction center protein K (61 aa).

Positions 1 to 24 (MLNILSFIGICLNSFLYSSSFFVA) are excised as a propeptide. The helical transmembrane segment at 40–60 (MPVIPLFFFLLAFVWQAAVSF) threads the bilayer.

Belongs to the PsbK family. PSII is composed of 1 copy each of membrane proteins PsbA, PsbB, PsbC, PsbD, PsbE, PsbF, PsbH, PsbI, PsbJ, PsbK, PsbL, PsbM, PsbT, PsbX, PsbY, PsbZ, Psb30/Ycf12, at least 3 peripheral proteins of the oxygen-evolving complex and a large number of cofactors. It forms dimeric complexes.

It is found in the plastid. The protein resides in the chloroplast thylakoid membrane. Functionally, one of the components of the core complex of photosystem II (PSII). PSII is a light-driven water:plastoquinone oxidoreductase that uses light energy to abstract electrons from H(2)O, generating O(2) and a proton gradient subsequently used for ATP formation. It consists of a core antenna complex that captures photons, and an electron transfer chain that converts photonic excitation into a charge separation. This is Photosystem II reaction center protein K from Cucumis sativus (Cucumber).